Here is a 969-residue protein sequence, read N- to C-terminus: MMDFLKRFFGSSQERILKRFQKLVEEVNACDEKFSSLSDDELRKKTPQLKQRYQDGESLDKLLPEAYGVVKNVCRRLAGTPVEVSGYHQQWDMVPYDVQILGAIAMHKGFITEMQTGEGKTLTAVMPLYLNALTGKPVHLVTVNDYLAQRDCEWVGSVLRWLGLTTGVLVSGSPPEKRKAIYQCDVVYGTASEFGFDYLRDNSIATRKEEQVGRGFYFAIIDEIDSVLIDEARTPLIISGPGEKHNPVYFELKDRVAELVYFQREMCNHIAIEARKVLDPFLGTDVLPKDKKVMEAISEACRALWLVSKGMPLNRVLRRVREHPDLRAMIDKWDVFYHAEQNKEQCLEKLSSLYIVVDEHNNDFELTDKGMLQWIEKIGGAAEDFVMMDMGHEYALIEEDATLSPADKLNRKIAVSEKDTQRKARAHGLRQLLRAHLLMEKDIDYIVRDDQIVIIDEHTGRPQSGRRFSEGLHQAIEAKEHVTIRKESQTFATVTLQNFFRLYEKLAGMTGTAITESREFKEIYSLYVLQVPTFKPCLRIDHNDAFYMTEREKYQAIVAEIISAHRSGKPILIGTESVEVSEKLSRILRQNRINHTVLNAKNHAQEAEIIAGAGKVGAVTVATNMAGRGTDIKLDEEAVAAGGLYVIGTSRHQSRRIDRQLRGRCARLGDPGAAKFFLSFEDRLMRLFASPKLNTLIRHFRPPEGEAMSDPMFDRLIETAQKRVEGRNYTIRKHTLEYDDVMNKQRQTIYAFRNDVLHAEDLFVVAKEQIEHVALALAFLILKDAHADHCSLPKIEEWLSYSFPVKLDDQEIRRLGDVDAVADYIGDLLIEAFDVKFSAMLAEFTEIIGSAANAQGICNDILRSVIISHIDEEWKVHLVDMDLLRSEVGLRSVGQKDPLIEFKNESFLLFEGLIRDIRIAIVKHLFALELSLTRSDRPDNAIPTVATAFHNHDNFRPMELTIVGEEEES.

Residues glutamine 99, 117 to 121 (GEGKT), and aspartate 631 contribute to the ATP site.

The protein belongs to the SecA family. Monomer and homodimer. Part of the essential Sec protein translocation apparatus which comprises SecA, SecYEG and auxiliary proteins SecDF. Other proteins may also be involved.

Its subcellular location is the cell inner membrane. The protein resides in the cytoplasm. The catalysed reaction is ATP + H2O + cellular proteinSide 1 = ADP + phosphate + cellular proteinSide 2.. Functionally, part of the Sec protein translocase complex. Interacts with the SecYEG preprotein conducting channel. Has a central role in coupling the hydrolysis of ATP to the transfer of proteins into and across the cell membrane, serving as an ATP-driven molecular motor driving the stepwise translocation of polypeptide chains across the membrane. The polypeptide is Protein translocase subunit SecA (Chlamydia trachomatis serovar A (strain ATCC VR-571B / DSM 19440 / HAR-13)).